A 318-amino-acid polypeptide reads, in one-letter code: Bis(5'-nucleosyl)-tetraphosphatase, symmetrical (318 aa).

A disordered region spans residues 269-318 (PGREVTGPAPVARAPRRPRERLGRQRSRGNRGNAGNTAVPAKPPVDTPQD). Residues 282-297 (APRRPRERLGRQRSRG) are compositionally biased toward basic residues. Pro residues predominate over residues 309–318 (AKPPVDTPQD).

This sequence belongs to the Ap4A hydrolase family.

The enzyme catalyses P(1),P(4)-bis(5'-adenosyl) tetraphosphate + H2O = 2 ADP + 2 H(+). Functionally, hydrolyzes diadenosine 5',5'''-P1,P4-tetraphosphate to yield ADP. The sequence is that of Bis(5'-nucleosyl)-tetraphosphatase, symmetrical from Xanthomonas oryzae pv. oryzae (strain MAFF 311018).